Here is a 439-residue protein sequence, read N- to C-terminus: Xylose isomerase (439 aa).

Catalysis depends on residues histidine 101 and aspartate 104. The Mg(2+) site is built by glutamate 232, glutamate 268, histidine 271, aspartate 296, aspartate 307, aspartate 309, and aspartate 339.

Belongs to the xylose isomerase family. As to quaternary structure, homotetramer. Mg(2+) is required as a cofactor.

The protein localises to the cytoplasm. The catalysed reaction is alpha-D-xylose = alpha-D-xylulofuranose. This Yersinia pseudotuberculosis serotype O:1b (strain IP 31758) protein is Xylose isomerase.